Here is a 139-residue protein sequence, read N- to C-terminus: MSMKYLMLLFATMIIRSFADSGNAIETTSPEITNTTTDIPAIRLCGPEGDGYCLHGDCIHARDINGMYCRCSHGYTGIRCQHVVLVDYQRSEKPNTTTSYIPSPGIVLVLVGIIMCCLLSVYRFTRRTNKLPLQDMVVP.

The first 19 residues, Met-1–Ala-19, serve as a signal peptide directing secretion. N-linked (GlcNAc...) asparagine; by host glycosylation occurs at Asn-34. The region spanning Ala-41 to Gln-81 is the EGF-like domain. Intrachain disulfides connect Cys-45/Cys-58, Cys-53/Cys-69, and Cys-71/Cys-80. Asn-95 carries an N-linked (GlcNAc...) asparagine; by host glycan.

Belongs to the orthopoxvirus OPG019 family.

The protein resides in the secreted. Functionally, stimulates cellular proliferation (hyperplasia)and mobility around infected cells to promote rapid and efficient spread of infection. The sequence is that of Growth factor (OPG019) from Camelus.